The chain runs to 544 residues: Probable protein kinase UbiB (544 aa).

The Protein kinase domain maps to 123 to 501 (EFDIKPLASA…KRQQATGKFL (379 aa)). ATP is bound by residues 129–137 (LASASIAQV) and K152. Catalysis depends on D287, which acts as the Proton acceptor. The next 2 membrane-spanning stretches (helical) occupy residues 496 to 516 (ATGK…AILV) and 519 to 539 (AYEQ…LLSW).

It belongs to the ABC1 family. UbiB subfamily.

The protein resides in the cell inner membrane. Its pathway is cofactor biosynthesis; ubiquinone biosynthesis [regulation]. Its function is as follows. Is probably a protein kinase regulator of UbiI activity which is involved in aerobic coenzyme Q (ubiquinone) biosynthesis. In Vibrio campbellii (strain ATCC BAA-1116), this protein is Probable protein kinase UbiB.